Here is a 604-residue protein sequence, read N- to C-terminus: uncharacterized protein (604 aa).

Residues 1–19 (MIVRILLLFIALFTFGVQA) form the signal peptide.

To H.influenzae HbpA.

This is an uncharacterized protein from Escherichia coli (strain K12).